The chain runs to 847 residues: DNA mismatch repair protein MutS (847 aa).

Residue 602–609 (GPNMSGKS) coordinates ATP.

This sequence belongs to the DNA mismatch repair MutS family.

Its function is as follows. This protein is involved in the repair of mismatches in DNA. It is possible that it carries out the mismatch recognition step. This protein has a weak ATPase activity. The chain is DNA mismatch repair protein MutS from Streptococcus uberis (strain ATCC BAA-854 / 0140J).